A 258-amino-acid polypeptide reads, in one-letter code: MVLIRVLANLLILQLSYAQKSSELVIGGDECNINEHRSLALVYITSGFLCGGTLINQQWVLTAAHCDRGNMLIFFDVHSLKGLNKDVQSRVAKEKFICPNRKKDDEKDKDIMLIKLDSPVSNSEHIAPLSLPSNPPSVGSVCRIMGWGAITSPNVTLPGVPHCANINILDYEVCRKAYTGLPATSRTLCAGILEGGKDSCKGDSGGPLICNGQFQGIVSWGAHPCGQSLKPGVYTKVFDYTEWIQSILAGNADATCPP.

A signal peptide spans 1 to 18 (MVLIRVLANLLILQLSYA). The propeptide occupies 19–24 (QKSSEL). The 225-residue stretch at 25-249 (VIGGDECNIN…YTEWIQSILA (225 aa)) folds into the Peptidase S1 domain. Cystine bridges form between C31/C163, C50/C66, C98/C256, C142/C210, C174/C189, and C200/C225. Residues H65 and D110 each act as charge relay system in the active site. A glycan (N-linked (GlcNAc...) asparagine) is linked at N154. Catalysis depends on S204, which acts as the Charge relay system.

The protein belongs to the peptidase S1 family. Snake venom subfamily. As to quaternary structure, monomer. In terms of tissue distribution, expressed by the venom gland.

The protein resides in the secreted. Snake venom serine protease that may act in the hemostasis system of the prey. The sequence is that of Snake venom serine protease from Lachesis stenophrys (Central American bushmaster).